Here is a 267-residue protein sequence, read N- to C-terminus: Regulatory protein RecX (267 aa).

This sequence belongs to the RecX family.

The protein localises to the cytoplasm. Functionally, modulates RecA activity. The polypeptide is Regulatory protein RecX (Staphylococcus epidermidis (strain ATCC 12228 / FDA PCI 1200)).